A 446-amino-acid chain; its full sequence is Homocitrate synthase, mitochondrial (446 aa).

The span at 1 to 14 (MCATDNAPAANAAP) shows a compositional bias: low complexity. The interval 1-36 (MCATDNAPAANAAPEKPSNVGVEVGHTGEQTNPYGA) is disordered. A Pyruvate carboxyltransferase domain is found at 48–307 (FQLIESTLRE…HKLRDLENLV (260 aa)). A 2-oxoglutarate-binding site is contributed by Arg-56. A Mg(2+)-binding site is contributed by Glu-57. Residues His-116, Arg-176, and Thr-210 each coordinate 2-oxoglutarate. His-237 and His-239 together coordinate Mg(2+). Residue His-334 is the Proton acceptor of the active site. The disordered stretch occupies residues 422–446 (TPTVAATEGPAVEDEPAAKKAKTEE). A compositionally biased stretch (basic and acidic residues) spans 437 to 446 (PAAKKAKTEE).

Belongs to the alpha-IPM synthase/homocitrate synthase family. Homocitrate synthase LYS20/LYS21 subfamily. It depends on Mg(2+) as a cofactor. Requires Mn(2+) as cofactor.

The protein localises to the mitochondrion. It carries out the reaction acetyl-CoA + 2-oxoglutarate + H2O = (2R)-homocitrate + CoA + H(+). The protein operates within amino-acid biosynthesis; L-lysine biosynthesis via AAA pathway; L-alpha-aminoadipate from 2-oxoglutarate: step 1/5. Functionally, catalyzes the aldol-type condensation of 2-oxoglutarate with acetyl-CoA to yield homocitrate. Carries out the first step of the alpha-aminoadipate (AAA) lysine biosynthesis pathway. This Yarrowia lipolytica (strain CLIB 122 / E 150) (Yeast) protein is Homocitrate synthase, mitochondrial (LYS1).